A 209-amino-acid polypeptide reads, in one-letter code: MSRTIVVKNPRTSGKDEDKAQIPSQDELPSGSSGAKTTNQIISEFRALIKDPIKLDEAVNYLYETLVDDAAVGIFIETRQLQKTGSLTALEGTVEETNDMCDLPDCDIFGMSTAEKTAKCCCPNCERMVAAVRFAPHLQTCLGLGRSSSRAALRRLTVSSRSSSTSTGGGQANEKSTDDEDWSLDSRPGKSTKNSRNKGSKKNQKNKLK.

The interval 1–36 (MSRTIVVKNPRTSGKDEDKAQIPSQDELPSGSSGAK) is disordered. The SGF11-type zinc-finger motif lies at 120 to 141 (CCCPNCERMVAAVRFAPHLQTC). The segment covering 156-166 (LTVSSRSSSTS) has biased composition (low complexity). The disordered stretch occupies residues 156-209 (LTVSSRSSSTSTGGGQANEKSTDDEDWSLDSRPGKSTKNSRNKGSKKNQKNKLK). Positions 193–209 (KNSRNKGSKKNQKNKLK) are enriched in basic residues.

It belongs to the SGF11 family. As to quaternary structure, component of some SAGA transcription coactivator-HAT complexes, at least composed of Ada2b, not/nonstop, Pcaf/Gcn5, Sgf11 and Spt3. Within the SAGA complex, Sgf11, e(y)2, and not/nonstop form an additional subcomplex of SAGA called the DUB module (deubiquitination module). Interacts directly with not/nonstop. Interacts with the AMEX complex component xmas-2. Interacts with Cbp80; important for promoter recruitment of Sgf11 that is not associated with the DUB module.

The protein resides in the nucleus. The protein localises to the nucleoplasm. Its subcellular location is the cytoplasm. In terms of biological role, component of the transcription regulatory histone acetylation (HAT) complex SAGA, a multiprotein complex that activates transcription by remodeling chromatin and mediating histone acetylation and deubiquitination. Within the SAGA complex, participates in a subcomplex that specifically deubiquitinates histone H2B. The SAGA complex is recruited to specific gene promoters by activators, where it is required for transcription. Required for nuclear receptor-mediated transactivation. Binds independently on SAGA to promoters in an RNA-dependent manner. Binds to mRNA and is essential for total mRNA export from the nucleus. Required to counteract heterochromatin silencing. Controls the development of neuronal connectivity in visual system by being required for accurate axon targeting in the optic lobe. Required for expression of ecdysone-induced genes such as br/broad. The chain is SAGA-associated factor 11 homolog 1 from Drosophila willistoni (Fruit fly).